The sequence spans 154 residues: Myoglobin (154 aa).

Positions 2–148 (GLSDGEWQLV…FRNDIAAKYK (147 aa)) constitute a Globin domain. Ser4 is modified (phosphoserine). Residue His65 participates in nitrite binding. His65 is an O2 binding site. Residue Thr68 is modified to Phosphothreonine. His94 is a heme b binding site.

It belongs to the globin family. In terms of assembly, monomeric.

Its subcellular location is the cytoplasm. It is found in the sarcoplasm. It catalyses the reaction Fe(III)-heme b-[protein] + nitric oxide + H2O = Fe(II)-heme b-[protein] + nitrite + 2 H(+). It carries out the reaction H2O2 + AH2 = A + 2 H2O. Monomeric heme protein which primary function is to store oxygen and facilitate its diffusion within muscle tissues. Reversibly binds oxygen through a pentacoordinated heme iron and enables its timely and efficient release as needed during periods of heightened demand. Depending on the oxidative conditions of tissues and cells, and in addition to its ability to bind oxygen, it also has a nitrite reductase activity whereby it regulates the production of bioactive nitric oxide. Under stress conditions, like hypoxia and anoxia, it also protects cells against reactive oxygen species thanks to its pseudoperoxidase activity. The polypeptide is Myoglobin (MB) (Spalax ehrenbergi (Middle East blind mole rat)).